A 269-amino-acid chain; its full sequence is MGWFWADQKTTGKDIGGAAVSSMSGCPVMHESSSSSPPSSECPVMQGDNDRINPLNNMPELAASKQPGQKMDLPVDRTISSIPKSPDSNEFWEYPSPQQMYNAMVRKGKIGGSGEVAEDAVESMVQVHNFLNEGCWQEVLEWEKPHTDESHVQPKLLKFMGKPGVLSPRARWMHLCGLLFPSHFSQELPFDRHDWIVLRGERKAEQQPPTFKEVRYVLDFYGGPDDENGMPTFHVDVRPALDSLDNAKDRMTRFLDRMISGPSSSSSAP.

The disordered stretch occupies residues 1-72 (MGWFWADQKT…ASKQPGQKMD (72 aa)). HRM repeat units lie at residues 25 to 30 (GCPVMH) and 41 to 46 (ECPVMQ).

This sequence belongs to the cytochrome c-type heme lyase family.

The protein localises to the mitochondrion inner membrane. Its subcellular location is the mitochondrion intermembrane space. The catalysed reaction is holo-[cytochrome c] = apo-[cytochrome c] + heme b. Functionally, lyase that catalyzes the covalent linking of the heme group to the cytochrome C apoprotein to produce the mature functional cytochrome. The polypeptide is Holocytochrome-c synthase (CYC3) (Saccharomyces cerevisiae (strain ATCC 204508 / S288c) (Baker's yeast)).